The primary structure comprises 400 residues: Tryptophan synthase beta chain (400 aa).

N6-(pyridoxal phosphate)lysine is present on K92.

Belongs to the TrpB family. As to quaternary structure, tetramer of two alpha and two beta chains. Pyridoxal 5'-phosphate serves as cofactor.

It catalyses the reaction (1S,2R)-1-C-(indol-3-yl)glycerol 3-phosphate + L-serine = D-glyceraldehyde 3-phosphate + L-tryptophan + H2O. The protein operates within amino-acid biosynthesis; L-tryptophan biosynthesis; L-tryptophan from chorismate: step 5/5. The beta subunit is responsible for the synthesis of L-tryptophan from indole and L-serine. This Neisseria meningitidis serogroup A / serotype 4A (strain DSM 15465 / Z2491) protein is Tryptophan synthase beta chain.